A 119-amino-acid chain; its full sequence is Toxin ICK-11 (119 aa).

Positions 1–19 are cleaved as a signal peptide; the sequence is MMKLYSLVIIATLAAAAFA. Cystine bridges form between cysteine 59–cysteine 74, cysteine 67–cysteine 80, cysteine 71–cysteine 116, and cysteine 73–cysteine 87.

This sequence belongs to the neurotoxin 25 family. ICK-8 subfamily. Expressed by the venom gland.

Its subcellular location is the secreted. In terms of biological role, ion channel inhibitor. The protein is Toxin ICK-11 of Trittame loki (Brush-footed trapdoor spider).